The primary structure comprises 63 residues: Large ribosomal subunit protein uL30 (63 aa).

It belongs to the universal ribosomal protein uL30 family. As to quaternary structure, part of the 50S ribosomal subunit.

In Chlorobium chlorochromatii (strain CaD3), this protein is Large ribosomal subunit protein uL30.